A 316-amino-acid polypeptide reads, in one-letter code: 4-diphosphocytidyl-2-C-methyl-D-erythritol kinase (316 aa).

The active site involves Lys32. An ATP-binding site is contributed by 126-136 (PVGAGLGGGSA). Asp168 is an active-site residue.

This sequence belongs to the GHMP kinase family. IspE subfamily.

The catalysed reaction is 4-CDP-2-C-methyl-D-erythritol + ATP = 4-CDP-2-C-methyl-D-erythritol 2-phosphate + ADP + H(+). The protein operates within isoprenoid biosynthesis; isopentenyl diphosphate biosynthesis via DXP pathway; isopentenyl diphosphate from 1-deoxy-D-xylulose 5-phosphate: step 3/6. Catalyzes the phosphorylation of the position 2 hydroxy group of 4-diphosphocytidyl-2C-methyl-D-erythritol. This chain is 4-diphosphocytidyl-2-C-methyl-D-erythritol kinase, found in Bifidobacterium longum (strain NCC 2705).